Consider the following 728-residue polypeptide: Phosphoribosylformylglycinamidine synthase subunit PurL (728 aa).

Residue His42 is part of the active site. 2 residues coordinate ATP: Tyr45 and Lys84. Residue Glu86 participates in Mg(2+) binding. Substrate-binding positions include 87-90 (SHNH) and Arg109. The Proton acceptor role is filled by His88. Asp110 serves as a coordination point for Mg(2+). Gln237 is a binding site for substrate. Residue Asp265 coordinates Mg(2+). 309–311 (ESQ) contributes to the substrate binding site. The ATP site is built by Asp491 and Gly528. Asn529 is a Mg(2+) binding site. A substrate-binding site is contributed by Ser531.

It belongs to the FGAMS family. In terms of assembly, monomer. Part of the FGAM synthase complex composed of 1 PurL, 1 PurQ and 2 PurS subunits.

Its subcellular location is the cytoplasm. The enzyme catalyses N(2)-formyl-N(1)-(5-phospho-beta-D-ribosyl)glycinamide + L-glutamine + ATP + H2O = 2-formamido-N(1)-(5-O-phospho-beta-D-ribosyl)acetamidine + L-glutamate + ADP + phosphate + H(+). It functions in the pathway purine metabolism; IMP biosynthesis via de novo pathway; 5-amino-1-(5-phospho-D-ribosyl)imidazole from N(2)-formyl-N(1)-(5-phospho-D-ribosyl)glycinamide: step 1/2. Part of the phosphoribosylformylglycinamidine synthase complex involved in the purines biosynthetic pathway. Catalyzes the ATP-dependent conversion of formylglycinamide ribonucleotide (FGAR) and glutamine to yield formylglycinamidine ribonucleotide (FGAM) and glutamate. The FGAM synthase complex is composed of three subunits. PurQ produces an ammonia molecule by converting glutamine to glutamate. PurL transfers the ammonia molecule to FGAR to form FGAM in an ATP-dependent manner. PurS interacts with PurQ and PurL and is thought to assist in the transfer of the ammonia molecule from PurQ to PurL. The polypeptide is Phosphoribosylformylglycinamidine synthase subunit PurL (Campylobacter jejuni subsp. jejuni serotype O:23/36 (strain 81-176)).